The following is a 606-amino-acid chain: NADH-ubiquinone oxidoreductase chain 5 (606 aa).

The next 16 helical transmembrane spans lie at 4-24 (FSSL…AINF), 43-63 (AFIT…EMII), 84-104 (FFSM…MEFS), 114-134 (INQF…LVTA), 140-160 (LFIG…WWYG), 171-191 (AILY…WFLI), 213-233 (LMGL…HPWL), 241-261 (TPVS…FLLI), 272-292 (FGQS…AMCA), 301-320 (IIAF…IGIN), 325-347 (AFLH…GSII), 366-386 (MPFT…MPFL), 413-433 (LVAT…ALLG), 457-477 (LLIG…PMTI), 485-505 (YLKM…LEIS), and 582-602 (GLIK…TTLL).

Belongs to the complex I subunit 5 family. As to quaternary structure, core subunit of respiratory chain NADH dehydrogenase (Complex I) which is composed of 45 different subunits.

Its subcellular location is the mitochondrion inner membrane. The enzyme catalyses a ubiquinone + NADH + 5 H(+)(in) = a ubiquinol + NAD(+) + 4 H(+)(out). Its function is as follows. Core subunit of the mitochondrial membrane respiratory chain NADH dehydrogenase (Complex I) which catalyzes electron transfer from NADH through the respiratory chain, using ubiquinone as an electron acceptor. Essential for the catalytic activity and assembly of complex I. The chain is NADH-ubiquinone oxidoreductase chain 5 (MT-ND5) from Ovis aries (Sheep).